The chain runs to 251 residues: Hydroxyacylglutathione hydrolase (251 aa).

Histidine 53, histidine 55, aspartate 57, histidine 58, histidine 110, aspartate 127, and histidine 165 together coordinate Zn(2+).

The protein belongs to the metallo-beta-lactamase superfamily. Glyoxalase II family. As to quaternary structure, monomer. Zn(2+) serves as cofactor.

It catalyses the reaction an S-(2-hydroxyacyl)glutathione + H2O = a 2-hydroxy carboxylate + glutathione + H(+). The protein operates within secondary metabolite metabolism; methylglyoxal degradation; (R)-lactate from methylglyoxal: step 2/2. In terms of biological role, thiolesterase that catalyzes the hydrolysis of S-D-lactoyl-glutathione to form glutathione and D-lactic acid. This Yersinia pseudotuberculosis serotype IB (strain PB1/+) protein is Hydroxyacylglutathione hydrolase.